Here is a 173-residue protein sequence, read N- to C-terminus: Crossover junction endodeoxyribonuclease RuvC (173 aa).

Residues D8, E67, and D139 contribute to the active site. The Mg(2+) site is built by D8, E67, and D139.

This sequence belongs to the RuvC family. Homodimer which binds Holliday junction (HJ) DNA. The HJ becomes 2-fold symmetrical on binding to RuvC with unstacked arms; it has a different conformation from HJ DNA in complex with RuvA. In the full resolvosome a probable DNA-RuvA(4)-RuvB(12)-RuvC(2) complex forms which resolves the HJ. Mg(2+) is required as a cofactor.

It is found in the cytoplasm. It carries out the reaction Endonucleolytic cleavage at a junction such as a reciprocal single-stranded crossover between two homologous DNA duplexes (Holliday junction).. In terms of biological role, the RuvA-RuvB-RuvC complex processes Holliday junction (HJ) DNA during genetic recombination and DNA repair. Endonuclease that resolves HJ intermediates. Cleaves cruciform DNA by making single-stranded nicks across the HJ at symmetrical positions within the homologous arms, yielding a 5'-phosphate and a 3'-hydroxyl group; requires a central core of homology in the junction. The consensus cleavage sequence is 5'-(A/T)TT(C/G)-3'. Cleavage occurs on the 3'-side of the TT dinucleotide at the point of strand exchange. HJ branch migration catalyzed by RuvA-RuvB allows RuvC to scan DNA until it finds its consensus sequence, where it cleaves and resolves the cruciform DNA. The sequence is that of Crossover junction endodeoxyribonuclease RuvC from Yersinia enterocolitica serotype O:8 / biotype 1B (strain NCTC 13174 / 8081).